Reading from the N-terminus, the 418-residue chain is Synaptotagmin-15 (418 aa).

Residues 1–4 lie on the Extracellular side of the membrane; it reads MAEQ. A helical; Signal-anchor for type III membrane protein transmembrane segment spans residues 5 to 27; it reads LAFLIGGIIGGLLLLIGVSCCLW. The Cytoplasmic segment spans residues 28 to 418; that stretch reads RRFCATFTYE…WHALCRPTEP (391 aa). 2 C2 domains span residues 144–261 and 275–396; these read CLGR…HRII and EFGD…EHWG.

This sequence belongs to the synaptotagmin family. As to quaternary structure, homodimer. As to expression, isoform 1 and isoform 2 are expressed in heart, lung, skeletal muscle and testis; not detected in brain, liver and kidney. Isoform 1 is expressed in spleen.

It is found in the membrane. Functionally, may be involved in the trafficking and exocytosis of secretory vesicles in non-neuronal tissues. This is Synaptotagmin-15 (Syt15) from Mus musculus (Mouse).